A 180-amino-acid polypeptide reads, in one-letter code: Large ribosomal subunit protein uL5 (180 aa).

It belongs to the universal ribosomal protein uL5 family. Part of the 50S ribosomal subunit; part of the 5S rRNA/L5/L18/L25 subcomplex. Contacts the 5S rRNA and the P site tRNA. Forms a bridge to the 30S subunit in the 70S ribosome.

In terms of biological role, this is one of the proteins that bind and probably mediate the attachment of the 5S RNA into the large ribosomal subunit, where it forms part of the central protuberance. In the 70S ribosome it contacts protein S13 of the 30S subunit (bridge B1b), connecting the 2 subunits; this bridge is implicated in subunit movement. Contacts the P site tRNA; the 5S rRNA and some of its associated proteins might help stabilize positioning of ribosome-bound tRNAs. The chain is Large ribosomal subunit protein uL5 from Streptococcus agalactiae serotype Ia (strain ATCC 27591 / A909 / CDC SS700).